The primary structure comprises 711 residues: Polyribonucleotide nucleotidyltransferase (711 aa).

2 residues coordinate Mg(2+): Asp486 and Asp492. The 60-residue stretch at 553 to 612 (PRIHTIKISTDKIKDVIGKGGSVIRALTEETGTTIEIEDDGTVKIAATDGEKAKYAIRRI) folds into the KH domain. An S1 motif domain is found at 622–690 (GRIYNGKVTR…RQGRVRLSIK (69 aa)). The disordered stretch occupies residues 690-711 (KEATEQSQPAAAPEAPASEQAE). Residues 694 to 711 (EQSQPAAAPEAPASEQAE) show a composition bias toward low complexity.

This sequence belongs to the polyribonucleotide nucleotidyltransferase family. Component of the RNA degradosome, which is a multiprotein complex involved in RNA processing and mRNA degradation. The cofactor is Mg(2+).

The protein resides in the cytoplasm. The enzyme catalyses RNA(n+1) + phosphate = RNA(n) + a ribonucleoside 5'-diphosphate. In terms of biological role, involved in mRNA degradation. Catalyzes the phosphorolysis of single-stranded polyribonucleotides processively in the 3'- to 5'-direction. This chain is Polyribonucleotide nucleotidyltransferase, found in Salmonella choleraesuis (strain SC-B67).